A 120-amino-acid chain; its full sequence is Ribonuclease P protein component (120 aa).

Belongs to the RnpA family. As to quaternary structure, consists of a catalytic RNA component (M1 or rnpB) and a protein subunit.

The catalysed reaction is Endonucleolytic cleavage of RNA, removing 5'-extranucleotides from tRNA precursor.. Functionally, RNaseP catalyzes the removal of the 5'-leader sequence from pre-tRNA to produce the mature 5'-terminus. It can also cleave other RNA substrates such as 4.5S RNA. The protein component plays an auxiliary but essential role in vivo by binding to the 5'-leader sequence and broadening the substrate specificity of the ribozyme. The sequence is that of Ribonuclease P protein component from Chlamydia trachomatis serovar A (strain ATCC VR-571B / DSM 19440 / HAR-13).